We begin with the raw amino-acid sequence, 81 residues long: Apolipoprotein C-I, acidic form (81 aa).

The first 24 residues, 1-24 (MRLFLSLLVVVLSIVLEGPTPAQG), serve as a signal peptide directing secretion.

The protein belongs to the apolipoprotein C1 family.

Its subcellular location is the secreted. This is Apolipoprotein C-I, acidic form (APOC1A) from Cercocebus atys (Sooty mangabey).